Here is a 220-residue protein sequence, read N- to C-terminus: Glutathione S-transferase 2 (220 aa).

The 87-residue stretch at V2–G88 folds into the GST N-terminal domain. Residues Y7–W8, P43–W46, K50, N59–L60, and Q72–S73 contribute to the glutathione site. Positions T90–I208 constitute a GST C-terminal domain. Y116 serves as a coordination point for substrate.

Belongs to the GST superfamily. Mu family. In terms of assembly, homodimer.

It localises to the cytoplasm. It catalyses the reaction RX + glutathione = an S-substituted glutathione + a halide anion + H(+). Its function is as follows. Conjugation of reduced glutathione to a wide number of exogenous and endogenous hydrophobic electrophiles. Participates in the formation of novel hepoxilin regioisomers. In Gallus gallus (Chicken), this protein is Glutathione S-transferase 2 (GSTM2).